Here is a 215-residue protein sequence, read N- to C-terminus: Ribonuclease T (215 aa).

Positions 20–194 constitute an Exonuclease domain; the sequence is VVIDVETAGF…YDTLQTAKLF (175 aa). Residues Asp-23, Glu-25, His-181, and Asp-186 each coordinate Mg(2+). Residue His-181 is the Proton donor/acceptor of the active site.

This sequence belongs to the RNase T family. Homodimer. Mg(2+) is required as a cofactor.

Its function is as follows. Trims short 3' overhangs of a variety of RNA species, leaving a one or two nucleotide 3' overhang. Responsible for the end-turnover of tRNA: specifically removes the terminal AMP residue from uncharged tRNA (tRNA-C-C-A). Also appears to be involved in tRNA biosynthesis. The polypeptide is Ribonuclease T (Yersinia pseudotuberculosis serotype O:1b (strain IP 31758)).